We begin with the raw amino-acid sequence, 204 residues long: MSAIVLNEKMEKASELALPESFSGINPHNLYLYVKSAQAAMRANSASALTRAEVRGGGKKPWAQKGGGRARAGSRRSPVFVGGGKAFGPKNNRNYDLKVNKKQKKLALNFALNEHAQKGSLFIVDSIEIASGKTKDAATLFKALNQRDTLFVKTVLDEKTYLAFENIASTYVIEENELNAYLAANYRSLVIEKAVWENLVGEAK.

Positions 52-76 (AEVRGGGKKPWAQKGGGRARAGSRR) are disordered.

The protein belongs to the universal ribosomal protein uL4 family. In terms of assembly, part of the 50S ribosomal subunit.

One of the primary rRNA binding proteins, this protein initially binds near the 5'-end of the 23S rRNA. It is important during the early stages of 50S assembly. It makes multiple contacts with different domains of the 23S rRNA in the assembled 50S subunit and ribosome. In terms of biological role, forms part of the polypeptide exit tunnel. The protein is Large ribosomal subunit protein uL4 of Sulfurimonas denitrificans (strain ATCC 33889 / DSM 1251) (Thiomicrospira denitrificans (strain ATCC 33889 / DSM 1251)).